We begin with the raw amino-acid sequence, 442 residues long: tRNA-2-methylthio-N(6)-dimethylallyladenosine synthase (442 aa).

The region spanning 2–120 (KKVFIRTFGC…LPKMIVDKET (119 aa)) is the MTTase N-terminal domain. The [4Fe-4S] cluster site is built by Cys11, Cys49, Cys83, Cys157, Cys161, and Cys164. A Radical SAM core domain is found at 143-375 (RVEGGAAFVS…NEVIEAETAR (233 aa)). A TRAM domain is found at 378–441 (QTMIGTVQRC…TFSLRGKIVE (64 aa)).

Belongs to the methylthiotransferase family. MiaB subfamily. As to quaternary structure, monomer. [4Fe-4S] cluster is required as a cofactor.

The protein resides in the cytoplasm. It catalyses the reaction N(6)-dimethylallyladenosine(37) in tRNA + (sulfur carrier)-SH + AH2 + 2 S-adenosyl-L-methionine = 2-methylsulfanyl-N(6)-dimethylallyladenosine(37) in tRNA + (sulfur carrier)-H + 5'-deoxyadenosine + L-methionine + A + S-adenosyl-L-homocysteine + 2 H(+). Catalyzes the methylthiolation of N6-(dimethylallyl)adenosine (i(6)A), leading to the formation of 2-methylthio-N6-(dimethylallyl)adenosine (ms(2)i(6)A) at position 37 in tRNAs that read codons beginning with uridine. In Neisseria meningitidis serogroup A / serotype 4A (strain DSM 15465 / Z2491), this protein is tRNA-2-methylthio-N(6)-dimethylallyladenosine synthase.